The chain runs to 600 residues: Elongation factor 4 (600 aa).

One can recognise a tr-type G domain in the interval 5–187 (KYIRNFSIIA…AIVNKLPPPK (183 aa)). Residues 17-22 (DHGKST) and 134-137 (NKID) contribute to the GTP site.

It belongs to the TRAFAC class translation factor GTPase superfamily. Classic translation factor GTPase family. LepA subfamily.

The protein resides in the cell inner membrane. The catalysed reaction is GTP + H2O = GDP + phosphate + H(+). Required for accurate and efficient protein synthesis under certain stress conditions. May act as a fidelity factor of the translation reaction, by catalyzing a one-codon backward translocation of tRNAs on improperly translocated ribosomes. Back-translocation proceeds from a post-translocation (POST) complex to a pre-translocation (PRE) complex, thus giving elongation factor G a second chance to translocate the tRNAs correctly. Binds to ribosomes in a GTP-dependent manner. This Rickettsia canadensis (strain McKiel) protein is Elongation factor 4.